Reading from the N-terminus, the 536-residue chain is Cytoplasmic dynein 2 intermediate chain 2 (536 aa).

Residue Ser15 is modified to Phosphoserine. Positions Arg80 to Val93 are DYNLL2 binding. A DYNLRB1 binding region spans residues Pro106 to Ala131. 5 WD repeats span residues Glu215–Leu255, Thr264–Leu308, Pro390–Ser430, Leu433–Thr473, and Gln480–Gly520.

It belongs to the dynein light intermediate chain family. In terms of assembly, the cytoplasmic dynein 2 complex consists of two catalytic heavy chains (HCs) and a number of non-catalytic subunits presented by intermediate chains (ICs), light intermediate chains (LICs) and light chains (LCs). Among them, a heavy chain (DYNC2H1), two intermediate chains (DYNC2I2 and DYNC2I1), a light intermediate chain (DYNC2LI1), and a light chain (DYNLT2B) are unique to the cytoplasmic dynein complex 2, but a subset of the light chains are also shared by dynein-1 and dynein-2 complexes. Interacts with DYNC2I1; their C-terminal domains each bind a copy of the heavy chain, and their extended N-terminal regions are held together by an array of light chain dimers. Interacts with DYNLL2; this interaction is essential for dynein-2-mediated retrograde trafficking of ciliary proteins. Interacts with DYNLRB1; this interaction is essential for dynein-2-mediated retrograde trafficking of ciliary proteins. Interacts (via the WD domains) with MAP3K7 and TAB3. Interacts (via WD domains) with TAB2 (via C-terminus). Interacts (via WD domains) with TRAF6 (via TRAF-type domains). In terms of tissue distribution, expressed in several cell lines (at protein level).

It localises to the cytoplasm. It is found in the cytoskeleton. Its subcellular location is the cilium basal body. The protein resides in the cilium axoneme. The protein localises to the microtubule organizing center. It localises to the centrosome. It is found in the cell projection. Its subcellular location is the cilium. The protein resides in the filopodium. Functionally, acts as one of several non-catalytic accessory components of the cytoplasmic dynein 2 complex (dynein-2 complex), a motor protein complex that drives the movement of cargos along microtubules within cilia and flagella in concert with the intraflagellar transport (IFT) system. DYNC2I2 plays a major role in retrograde ciliary protein trafficking and in ciliogenesis. Required also to maintain a functional transition zone. In terms of biological role, acts as a negative regulator of the Toll-like and IL-1R receptor signaling pathways. Inhibits the MAP3K7-induced NF-kappa-B activation pathway. Inhibits MAP3K7 phosphorylation at 'Thr-184' and 'Thr-187' upon Il-1 beta stimulation. In Homo sapiens (Human), this protein is Cytoplasmic dynein 2 intermediate chain 2.